Here is a 313-residue protein sequence, read N- to C-terminus: Ribosomal protein L11 methyltransferase (313 aa).

Thr161, Gly182, Asp204, and Asn247 together coordinate S-adenosyl-L-methionine.

The protein belongs to the methyltransferase superfamily. PrmA family.

The protein resides in the cytoplasm. The catalysed reaction is L-lysyl-[protein] + 3 S-adenosyl-L-methionine = N(6),N(6),N(6)-trimethyl-L-lysyl-[protein] + 3 S-adenosyl-L-homocysteine + 3 H(+). Its function is as follows. Methylates ribosomal protein L11. This Alkaliphilus oremlandii (strain OhILAs) (Clostridium oremlandii (strain OhILAs)) protein is Ribosomal protein L11 methyltransferase.